The chain runs to 321 residues: Methenyltetrahydromethanopterin cyclohydrolase (321 aa).

This sequence belongs to the MCH family.

It localises to the cytoplasm. It catalyses the reaction 5,10-methenyl-5,6,7,8-tetrahydromethanopterin + H2O = N(5)-formyl-5,6,7,8-tetrahydromethanopterin + H(+). It functions in the pathway one-carbon metabolism; methanogenesis from CO(2); 5,10-methenyl-5,6,7,8-tetrahydromethanopterin from CO(2): step 3/3. Catalyzes the reversible interconversion of 5-formyl-H(4)MPT to methenyl-H(4)MPT(+). The polypeptide is Methenyltetrahydromethanopterin cyclohydrolase (Methanosarcina mazei (strain ATCC BAA-159 / DSM 3647 / Goe1 / Go1 / JCM 11833 / OCM 88) (Methanosarcina frisia)).